Reading from the N-terminus, the 262-residue chain is Apolipoprotein A-I-1 (262 aa).

The N-terminal stretch at 1–18 (MKFLALALTILLAAGTQA) is a signal peptide. Positions 32–63 (VKAALSMYIAQVKLTAQRSIDLLDDTEYKEYK) are 3 X approximate tandem repeats. Repeat copies occupy residues 64–85 (MQLTQSLDNLQQYADATSQSLA) and 87–107 (YSEAFGTQLTDATAAVRAEVM). The 10 X approximate tandem repeats stretch occupies residues 64 to 262 (MQLTQSLDNL…YETISQAMKA (199 aa)). The stretch at 108–118 (KDVEELRSQLE) is one 3; half-length repeat. Tandem repeats lie at residues 119–140 (PKRAELKEVLDKHIDEYRKKLE), 141–162 (PLIKEHIELRRTEMEAFRAKME), 163–184 (PIVEELRAKVAINVEETKTKLM), 185–206 (PIVEIVRAKLTERLEELRTLAA), and 207–228 (PYAEEYKEQMIKAVGEVREKVS). Residues 229–239 (PLSEDFKGQVG) form a 9; half-length repeat. Copy 10 of the repeat occupies 240–262 (PAAEQAKQKLLAFYETISQAMKA).

It belongs to the apolipoprotein A1/A4/E family.

The protein resides in the secreted. Functionally, participates in the reverse transport of cholesterol from tissues to the liver for excretion by promoting cholesterol efflux from tissues and by acting as a cofactor for the lecithin cholesterol acyltransferase (LCAT). This Oncorhynchus mykiss (Rainbow trout) protein is Apolipoprotein A-I-1.